The primary structure comprises 131 residues: UPF0102 protein YraN (131 aa).

Polar residues predominate over residues 1–19; it reads MATVPTRSGSPRQLTTKQT. The tract at residues 1–21 is disordered; it reads MATVPTRSGSPRQLTTKQTGD.

This sequence belongs to the UPF0102 family.

The sequence is that of UPF0102 protein YraN from Escherichia coli (strain K12 / MC4100 / BW2952).